Here is a 226-residue protein sequence, read N- to C-terminus: MLTQQELKQQAADAALELVEQVAGPDVIIGVGTGSTADLFIDGLACFKGRLRGTVASSERSAARLAGHGLAVLDLNDVQSMPIYVDGADEIDPNLHMIKGGGGALTREKIVASVARRYICIADESKLVERLGRFPLPVEVIPMARNAVARGLSRLGGQPALREGFVTDNGNIILDVAGLSIADAPGLEKTINDIPGVVTCGLFALAGADVALLATQDGIRRLERRG.

Substrate is bound by residues 33 to 36 (TGST), 86 to 89 (DGAD), and 99 to 102 (KGGG). Catalysis depends on Glu108, which acts as the Proton acceptor. A substrate-binding site is contributed by Lys126.

It belongs to the ribose 5-phosphate isomerase family. As to quaternary structure, homodimer.

It carries out the reaction aldehydo-D-ribose 5-phosphate = D-ribulose 5-phosphate. Its pathway is carbohydrate degradation; pentose phosphate pathway; D-ribose 5-phosphate from D-ribulose 5-phosphate (non-oxidative stage): step 1/1. Its function is as follows. Catalyzes the reversible conversion of ribose-5-phosphate to ribulose 5-phosphate. This is Ribose-5-phosphate isomerase A from Bordetella pertussis (strain Tohama I / ATCC BAA-589 / NCTC 13251).